Here is a 98-residue protein sequence, read N- to C-terminus: NADH-ubiquinone oxidoreductase chain 4L (98 aa).

The next 3 membrane-spanning stretches (helical) occupy residues 1-21, 28-48, and 59-79; these read MTPLNINLTMAFFLALAGVLI, STLLCLEGMMLSLFILLSLLI, and APLILLVFSACEAGVGLALLV.

This sequence belongs to the complex I subunit 4L family. In terms of assembly, core subunit of respiratory chain NADH dehydrogenase (Complex I) which is composed of 45 different subunits.

Its subcellular location is the mitochondrion inner membrane. The enzyme catalyses a ubiquinone + NADH + 5 H(+)(in) = a ubiquinol + NAD(+) + 4 H(+)(out). Core subunit of the mitochondrial membrane respiratory chain NADH dehydrogenase (Complex I) which catalyzes electron transfer from NADH through the respiratory chain, using ubiquinone as an electron acceptor. Part of the enzyme membrane arm which is embedded in the lipid bilayer and involved in proton translocation. In Tarsipes rostratus (Honey possum), this protein is NADH-ubiquinone oxidoreductase chain 4L (MT-ND4L).